Reading from the N-terminus, the 189-residue chain is Cytochrome bo(3) ubiquinol oxidase subunit 3 (189 aa).

The Cytoplasmic portion of the chain corresponds to 1-10; the sequence is MIKETMRNNK. The chain crosses the membrane as a helical span at residues 11–31; the sequence is LFGLWIYLMSDCIIFAVLFAV. The Extracellular portion of the chain corresponds to 32-52; the sequence is YAIISSNFSTNLINHKIFNLS. The helical transmembrane segment at 53–73 threads the bilayer; that stretch reads YVFLETLILLLSSLSSGMLTI. The Cytoplasmic segment spans residues 74-81; that stretch reads QKNKNNIK. The chain crosses the membrane as a helical span at residues 82 to 102; sequence IIYFYLLLTFFLGLSFLLMEV. Topologically, residues 103-122 are extracellular; the sequence is NEFYKLILENCSPSQHAFFS. Residues 123-143 traverse the membrane as a helical segment; it reads IFFTIVGVHGIHVFFGLIFIL. Residues 144 to 161 are Cytoplasmic-facing; sequence SILYQLFYLGITNTIRIR. A helical membrane pass occupies residues 162-182; the sequence is ILCFSLFWHFLDIIWICVFTF. Topologically, residues 183 to 189 are extracellular; the sequence is VYLNGVI.

This sequence belongs to the cytochrome c oxidase subunit 3 family. In terms of assembly, heterooctamer of two A chains, two B chains, two C chains and two D chains.

Its subcellular location is the cell membrane. In terms of biological role, cytochrome bo(3) ubiquinol terminal oxidase is the component of the aerobic respiratory chain of E.coli that predominates when cells are grown at high aeration. Has proton pump activity across the membrane in addition to electron transfer, pumping 2 protons/electron. The polypeptide is Cytochrome bo(3) ubiquinol oxidase subunit 3 (cyoC) (Buchnera aphidicola subsp. Schizaphis graminum (strain Sg)).